A 505-amino-acid chain; its full sequence is Cell division control protein 6 homolog B (505 aa).

Residues 37–72 (KRKMRSDSAAVSGNSVSTPKKLKSHLPSSVPNPGMS) form a disordered region. The span at 45–54 (AAVSGNSVST) shows a compositional bias: polar residues.

Belongs to the CDC6/cdc18 family.

Its subcellular location is the nucleus. Functionally, may be involved in the initiation of DNA replication. In Arabidopsis thaliana (Mouse-ear cress), this protein is Cell division control protein 6 homolog B.